Consider the following 695-residue polypeptide: Cysteine-rich receptor-like protein kinase 6 (695 aa).

The signal sequence occupies residues 1–31; that stretch reads MRRHRPYLDGVAAAAATFLLAVLLHAPLAAG. Residues 32–294 lie on the Extracellular side of the membrane; sequence EDEPPPWVLC…ATSGEKTKNR (263 aa). Gnk2-homologous domains follow at residues 38–142 and 151–261; these read WVLC…NRDF and TTYT…VFPF. 4 N-linked (GlcNAc...) asparagine glycosylation sites follow: Asn-49, Asn-53, Asn-70, and Asn-101. 2 disulfide bridges follow: Cys-96-Cys-105 and Cys-108-Cys-133. A glycan (N-linked (GlcNAc...) asparagine) is linked at Asn-178. Cystine bridges form between Cys-215–Cys-224 and Cys-227–Cys-252. Residues 295 to 315 traverse the membrane as a helical segment; it reads IGTVLAIVMPAIAAILLMVVA. The Cytoplasmic segment spans residues 316-695; the sequence is CFCCWKRIKK…DLSITELVPR (380 aa). One can recognise a Protein kinase domain in the interval 363–634; it reads FADTKMIGQG…PTISSVNIML (272 aa). ATP is bound by residues 369 to 377 and Lys-391; that span reads IGQGGFGMV. Catalysis depends on Asp-488, which acts as the Proton acceptor. The tract at residues 658–682 is disordered; sequence DSSNPYSERYPRPRHSGYSDNSTVV.

Belongs to the protein kinase superfamily. Ser/Thr protein kinase family. CRK subfamily.

Its subcellular location is the membrane. Involved in disease resistance. Required for NPR1/NH1-mediated immunity to the bacterial blight pathogen Xanthomomas oryzae pv. oryzae (Xoo). Required for the benzothiadiazole (BTH)-induced immune response. Possesses kinase activity in vitro. This chain is Cysteine-rich receptor-like protein kinase 6, found in Oryza sativa subsp. japonica (Rice).